Reading from the N-terminus, the 168-residue chain is Transcriptional repressor NrdR (168 aa).

The segment at 1-21 (MQCPACRHTDSRVLESRSSES) is disordered. A zinc finger spans residues 3 to 34 (CPACRHTDSRVLESRSSESGRSVRRRRECLSC). A compositionally biased stretch (basic and acidic residues) spans 7–20 (RHTDSRVLESRSSE). The 91-residue stretch at 49 to 139 (ISVIKRNGDR…VYRQFRGVRD (91 aa)) folds into the ATP-cone domain.

Belongs to the NrdR family. Zn(2+) serves as cofactor.

Its function is as follows. Negatively regulates transcription of bacterial ribonucleotide reductase nrd genes and operons by binding to NrdR-boxes. The polypeptide is Transcriptional repressor NrdR (Synechococcus elongatus (strain ATCC 33912 / PCC 7942 / FACHB-805) (Anacystis nidulans R2)).